The primary structure comprises 80 residues: Iota-conotoxin-like r11c (80 aa).

Positions 1-19 (MKLCLTFLLVLMILASVTG) are cleaved as a signal peptide. Residues 20–35 (EKSSKHTLSRAARVKN) constitute a propeptide that is removed on maturation. 4-hydroxyproline; partial is present on residues P38 and P47. Disulfide bonds link C41/C55, C48/C58, C54/C63, and C57/C72. The residue at position 65 (P65) is a 4-hydroxyproline. L78 carries the D-leucine modification. R80 is a propeptide (removed by a carboxypeptidase).

In terms of processing, the natural D-Leu form of the peptide is more potent than the synthetic L-Leu form. As to expression, expressed by the venom duct.

It is found in the secreted. Functionally, iota-conotoxins bind to voltage-gated sodium channels (Nav) and act as agonists by shifting the voltage-dependence of activation to more hyperpolarized levels. Causes circular motion, convulsions, copious urination, rigid paralysis and death upon intracranial injection into mice. Causes unbalanced swimming, swimming in diagonal and vertical motion and death, when injected intraperitoneally into goldfish. L-Leu and D-Leu forms are active on both nerve and muscle. The sequence is that of Iota-conotoxin-like r11c from Conus radiatus (Rayed cone).